We begin with the raw amino-acid sequence, 969 residues long: Liprin-beta-1 (969 aa).

A Phosphoserine modification is found at Ser37. Thr39 bears the Phosphothreonine mark. Ser40 bears the Phosphoserine mark. A coiled-coil region spans residues 99–310 (GDVYQERLAR…CLSRYRKMQD (212 aa)). Lys291 is subject to N6-acetyllysine. 3 disordered regions span residues 342 to 361 (DLER…RDLL), 381 to 407 (LLPP…FEEG), and 424 to 482 (GVST…RKAR). A compositionally biased stretch (low complexity) spans 346–358 (STSSTPGMGSPSR). Phosphoserine occurs at positions 403 and 435. Positions 426–438 (STSSLQKSSSLGN) are enriched in low complexity. Basic and acidic residues predominate over residues 439–452 (LKKEASDGTDKAPT). Residue Lys440 forms a Glycyl lysine isopeptide (Lys-Gly) (interchain with G-Cter in SUMO2) linkage. Residue Ser500 is modified to Phosphoserine. The segment covering 518 to 529 (AGTSRSKGSQGT) has biased composition (polar residues). A disordered region spans residues 518-593 (AGTSRSKGSQ…PRLGWSRDLG (76 aa)). Ser538 is modified (phosphoserine). Over residues 543 to 557 (KKSRGIMRLFGKLRR) the composition is skewed to basic residues. Phosphoserine is present on residues Ser560 and Ser595. 2 SAM domains span residues 606-670 (WTKE…LGSE) and 678-741 (LDFN…LRIN). Phosphoserine occurs at positions 753 and 757. The SAM 3 domain occupies 763–835 (VQQWTNHRVM…ATHFNLLIGA (73 aa)). Residues Ser957, Ser959, and Ser961 each carry the phosphoserine modification. Residue Thr963 is modified to Phosphothreonine.

The protein belongs to the liprin family. Liprin-beta subfamily. In terms of assembly, forms homodimers and heterodimers. Interacts with S100A4 in a Ca(2+)-dependent mode. Part of a cortical microtubule stabilization complex (CMSC) composed of KANK1, PPFIA1, PPFIBP1, ERC1/ELKS, PHLDB2/LL5beta, CLASPs, KIF21A and possibly additional interactors; within CMSCs KANK1 and PHLDB2/LL5beta seem to be the core components for recruiting microtubule-binding proteins KIF21A and CLASPs, whereas PPFIA1, PPFIBP1 and ERC1/ELKS serve as scaffolds for protein clustering. Interacts with KANK1 (via CC1 domain, residues 244-339).

The protein resides in the cytoplasm. Its subcellular location is the cell cortex. In terms of biological role, may regulate the disassembly of focal adhesions. Did not bind receptor-like tyrosine phosphatases type 2A. This chain is Liprin-beta-1 (Ppfibp1), found in Mus musculus (Mouse).